Consider the following 624-residue polypeptide: Aeromonas extracellular serine protease (624 aa).

The first 24 residues, 1–24 (MKQTSLALAITALLSTLPSALVQA), serve as a signal peptide directing secretion. Cys-28 and Cys-48 are joined by a disulfide. Residue Asn-53 coordinates Ca(2+). In terms of domain architecture, Peptidase S8 spans 59 to 421 (QWYLLNSGQD…GKVRDVKGLE (363 aa)). The Charge relay system role is filled by Asp-102. Residue Asp-111 participates in Ca(2+) binding. The segment at 116-140 (VRPGSKNVVTGSDDPTPTDPDTAHG) is disordered. The active-site Charge relay system is His-139. Ca(2+) contacts are provided by Val-150, Asn-152, Ile-154, Thr-156, Asp-321, Leu-322, Gly-324, Met-327, Asn-330, and Cys-350. A disulfide bridge links Cys-325 with Cys-350. The active-site Charge relay system is Ser-360. One can recognise a P/Homo B domain in the interval 456-622 (LPPLVQLPWQ…SLRVLGHDAN (167 aa)). The Ca(2+) site is built by Asp-478, Asp-512, Asp-577, Ala-579, Asn-602, and Asn-603.

It belongs to the peptidase S8 family. Furin subfamily. In terms of assembly, forms a complex with the chaperone ORF2 in the periplasm. After translocation of the ASP-ORF2 complex from the periplasm to the extracellular space, the complex is dissociated in a pH-dependent manner. Requires Ca(2+) as cofactor.

It localises to the periplasm. The protein resides in the secreted. The catalysed reaction is Cleavage of -Lys-Lys-|-Xaa and -Lys-Arg-|-Xaa bonds.. Folding, maturation and production of the active form of the protease by the cell requires a protein (ORF2), encoded just downstream of asp, which acts as a chaperone. Formation of a complex with ORF2 in the periplasm also inactivates the protease activity and likely protects ASP from intrinsic proteases. In vitro, protease activity is inhibited by human alpha-2-macroglobulin, suggesting that this inhibitor can impede ASP virulence activities in A.sobria infection sites. However, slow ASP inhibition by alpha-2-macroglobulin in plasma may indicate insufficient ASP control in vivo. Activity is inhibited by serine protease inhibitors such as 4-(2-aminoethyl)-benzenesulfonyl fluoride (AEBSF) and diisopropyl fluorophosphate (DFP). Not inhibited by metallo-protease inhibitors and cysteine protease inhibitors. The treatment with reagents to modify sulfhydryl group do not reduce the activity. Exhibits serine protease activity. Preferentially cleaves the peptide bond following two basic residues, one of which is Lys, but does not recognize the bond following a single basic residue. Probable potent virulence factor that cleaves various host plasma proteins, including prekallikrein, prothrombin and fibrinogen. ASP induces vascular leakage and reduction in blood pressure by activating the host plasma kallikrein/kinin system. It affects the host coagulation system during infection through activation of prothrombin to alpha-thrombin and degradation of fibrinogen, which impairs plasma clottability. It also hydrolyzes the complement component C5, releasing the C5a anaphylatoxin, which causes the formation of pus and edema. In addition, degrades its external chaperone ORF2 after the secretion of the ASP-ORF2 complex. In Aeromonas sobria, this protein is Aeromonas extracellular serine protease.